A 698-amino-acid chain; its full sequence is Serotransferrin (698 aa).

The signal sequence occupies residues 1 to 19 (MRLAVGALLVCAVLGLCLA). 2 consecutive Transferrin-like domains span residues 25 to 347 (VRWC…NLRE) and 361 to 683 (VKWC…NLRK). 2 cysteine pairs are disulfide-bonded: Cys-28–Cys-67 and Cys-38–Cys-58. Dimethylated arginine is present on Arg-42. O-linked (GalNAc...) serine glycosylation occurs at Ser-51. Positions 82 and 114 each coordinate Fe(3+). 17 disulfide bridges follow: Cys-137/Cys-213, Cys-156/Cys-350, Cys-177/Cys-193, Cys-180/Cys-198, Cys-190/Cys-196, Cys-246/Cys-260, Cys-358/Cys-615, Cys-364/Cys-396, Cys-374/Cys-387, Cys-421/Cys-693, Cys-437/Cys-656, Cys-469/Cys-542, Cys-493/Cys-684, Cys-503/Cys-517, Cys-514/Cys-525, Cys-582/Cys-596, and Cys-634/Cys-639. The hydrogencarbonate site is built by Thr-139, Arg-143, Ala-145, and Gly-146. A Fe(3+)-binding site is contributed by Tyr-207. His-268 is a binding site for Fe(3+). The residue at position 389 (Ser-389) is a Phosphoserine; by FAM20C. Asp-411 provides a ligand contact to Fe(3+). A glycan (N-linked (GlcNAc...) (complex) asparagine) is linked at Asn-432. Fe(3+) is bound at residue Tyr-445. Positions 471, 475, 477, and 478 each coordinate hydrogencarbonate. N-linked (GlcNAc...) asparagine; atypical; partial glycosylation is present at Asn-491. Tyr-536 provides a ligand contact to Fe(3+). A Fe(3+)-binding site is contributed by His-604. N-linked (GlcNAc...) (complex) asparagine glycosylation occurs at Asn-630. Ser-685 is subject to Phosphoserine; by FAM20C.

Belongs to the transferrin family. In terms of assembly, monomer. Part of a complex composed of SLC40A1/ferroportin, TF/transferrin and HEPH/hephaestin that transfers iron from cells to transferrin. (Microbial infection) Binds to Neisseria transferrin-binding protein A (tbpA or tbp1). Forms a large complex with TbpA and TbpB. As to quaternary structure, (Microbial infection) Binds to Neisseria transferrin-binding protein B (tbpb or tbp2). As to expression, expressed by the liver and secreted in plasma.

The protein localises to the secreted. In terms of biological role, transferrins are iron binding transport proteins which can bind two Fe(3+) ions in association with the binding of an anion, usually bicarbonate. It is responsible for the transport of iron from sites of absorption and heme degradation to those of storage and utilization. Serum transferrin may also have a further role in stimulating cell proliferation. Functionally, (Microbial infection) Serves as an iron source for Neisseria species, which capture the protein and extract its iron for their own use. (Microbial infection) Serves as an iron source for parasite T.brucei (strain 427), which capture TF via its own transferrin receptor ESAG6:ESAG7 and extract its iron for its own use. This Homo sapiens (Human) protein is Serotransferrin.